Reading from the N-terminus, the 37-residue chain is Photosystem I reaction center subunit VIII (37 aa).

The chain crosses the membrane as a helical span at residues 10–30 (IFVPLVGLVFPAIAMASLSLY).

This sequence belongs to the PsaI family.

It is found in the plastid. The protein resides in the chloroplast thylakoid membrane. In terms of biological role, may help in the organization of the PsaL subunit. The chain is Photosystem I reaction center subunit VIII from Gossypium hirsutum (Upland cotton).